Here is a 241-residue protein sequence, read N- to C-terminus: MKIDIVPTPGRLLKRYKRFLADIQLPDGAELTIHCPNTGAMTGCAEPGSLVYYSDSGNPARKYRHTWELVETPAGEFACVNTARPNQLVGEAVDAGVIKELQGYPLKKAEVKFGDQNSRADWMLSGSSELPDCYVEVKNVTLCLHGRGYFPDAVSTRGQKHLEELMSVVRNGKRAALVFCVNHSGISVVSPATHIDARYGALLSEAIEAGVEVLAYKSEITPGEIRLTQKLEVTPFDSEAF.

This sequence belongs to the SfsA family.

This Hahella chejuensis (strain KCTC 2396) protein is Sugar fermentation stimulation protein homolog.